Here is a 174-residue protein sequence, read N- to C-terminus: Crossover junction endodeoxyribonuclease RuvC (174 aa).

Active-site residues include aspartate 8, glutamate 69, and aspartate 141. Residues aspartate 8, glutamate 69, and aspartate 141 each contribute to the Mg(2+) site.

This sequence belongs to the RuvC family. In terms of assembly, homodimer which binds Holliday junction (HJ) DNA. The HJ becomes 2-fold symmetrical on binding to RuvC with unstacked arms; it has a different conformation from HJ DNA in complex with RuvA. In the full resolvosome a probable DNA-RuvA(4)-RuvB(12)-RuvC(2) complex forms which resolves the HJ. Mg(2+) serves as cofactor.

The protein localises to the cytoplasm. It catalyses the reaction Endonucleolytic cleavage at a junction such as a reciprocal single-stranded crossover between two homologous DNA duplexes (Holliday junction).. Functionally, the RuvA-RuvB-RuvC complex processes Holliday junction (HJ) DNA during genetic recombination and DNA repair. Endonuclease that resolves HJ intermediates. Cleaves cruciform DNA by making single-stranded nicks across the HJ at symmetrical positions within the homologous arms, yielding a 5'-phosphate and a 3'-hydroxyl group; requires a central core of homology in the junction. The consensus cleavage sequence is 5'-(A/T)TT(C/G)-3'. Cleavage occurs on the 3'-side of the TT dinucleotide at the point of strand exchange. HJ branch migration catalyzed by RuvA-RuvB allows RuvC to scan DNA until it finds its consensus sequence, where it cleaves and resolves the cruciform DNA. This is Crossover junction endodeoxyribonuclease RuvC from Xanthomonas oryzae pv. oryzae (strain PXO99A).